A 203-amino-acid chain; its full sequence is Twist-related protein 1 (203 aa).

Over residues 1–18 (MMQDVSSSPVSPADDSLS) the composition is skewed to low complexity. Positions 1 to 106 (MMQDVSSSPV…GGGSPQSYEE (106 aa)) are disordered. Residues 34–43 (RGGRKRRSSS) show a composition bias toward basic residues. Gly residues-rich tracts occupy residues 47–66 (AGGG…GGDE) and 81–100 (GCGG…GGGS). The region spanning 109–160 (TQRVMANVRERQRTQSLNEAFAALRKIIPTLPSDKLSKIQTLKLAARYIDFL) is the bHLH domain. The tract at residues 162-192 (QVLQSDELDSKMASCSYVAHERLSYAFSVWR) is sufficient for transactivation activity.

In terms of assembly, efficient DNA binding requires dimerization with another bHLH protein. Homodimer or heterodimer with E proteins such as TCF3. ID1 binds preferentially to TCF3 but does not interact efficiently with TWIST1 so ID1 levels control the amount of TCF3 available to dimerize with TWIST and thus determine the type of dimer formed.

The protein localises to the nucleus. Acts as a transcriptional regulator. Inhibits myogenesis by sequestrating E proteins, inhibiting trans-activation by MEF2, and inhibiting DNA-binding by MYOD1 through physical interaction. This interaction probably involves the basic domains of both proteins. Also represses expression of pro-inflammatory cytokines such as TNFA and IL1B. Regulates cranial suture patterning and fusion. Activates transcription as a heterodimer with E proteins. Regulates gene expression differentially, depending on dimer composition. Homodimers induce expression of FGFR2 and POSTN while heterodimers repress FGFR2 and POSTN expression and induce THBS1 expression. Heterodimerization is also required for osteoblast differentiation. Represses the activity of the circadian transcriptional activator: NPAS2-BMAL1 heterodimer. The chain is Twist-related protein 1 (TWIST1) from Pongo pygmaeus (Bornean orangutan).